The primary structure comprises 433 residues: Tol-Pal system protein TolB (433 aa).

The signal sequence occupies residues 1 to 21 (MRNLLRGMLVVICCMAGIAAA).

This sequence belongs to the TolB family. In terms of assembly, the Tol-Pal system is composed of five core proteins: the inner membrane proteins TolA, TolQ and TolR, the periplasmic protein TolB and the outer membrane protein Pal. They form a network linking the inner and outer membranes and the peptidoglycan layer.

It localises to the periplasm. Its function is as follows. Part of the Tol-Pal system, which plays a role in outer membrane invagination during cell division and is important for maintaining outer membrane integrity. The polypeptide is Tol-Pal system protein TolB (Pseudomonas fluorescens (strain SBW25)).